We begin with the raw amino-acid sequence, 167 residues long: MASPRTVTIVALSVALGLFFVFMGTIKLTPRLSKDAYSEMKRAYKSYVRALPLLKKMGINSILLRKSIGALEVACGIVMTLVPGRPKDVANFFLLLLVLAVLFFHQLVGDPLKRYAHALVFGILLTCRLLIARKPEDRSSEKKPLPGNAEEQPSLYEKAPQGKVKVS.

The Cytoplasmic portion of the chain corresponds to 1–5; sequence MASPR. Residues 6–26 traverse the membrane as a helical segment; sequence TVTIVALSVALGLFFVFMGTI. Topologically, residues 27-61 are lumenal; the sequence is KLTPRLSKDAYSEMKRAYKSYVRALPLLKKMGINS. The segment at 43-54 is interaction with NGFR; that stretch reads AYKSYVRALPLL. Residues 62-82 form a helical membrane-spanning segment; sequence ILLRKSIGALEVACGIVMTLV. Residues 83–88 lie on the Cytoplasmic side of the membrane; it reads PGRPKD. A helical transmembrane segment spans residues 89 to 109; the sequence is VANFFLLLLVLAVLFFHQLVG. At 110-114 the chain is on the lumenal side; it reads DPLKR. A helical transmembrane segment spans residues 115 to 132; sequence YAHALVFGILLTCRLLIA. The Cytoplasmic segment spans residues 133-167; it reads RKPEDRSSEKKPLPGNAEEQPSLYEKAPQGKVKVS. The interval 136-167 is disordered; it reads EDRSSEKKPLPGNAEEQPSLYEKAPQGKVKVS.

The protein belongs to the DoxX family. In terms of assembly, may interact with NGFR. Interacts with RPN1, RPN2 and CANX.

The protein localises to the peroxisome membrane. It is found in the cytoplasmic vesicle. It localises to the endoplasmic reticulum membrane. In terms of biological role, molecular chaperone which mediates the proper assembly and functional expression of the nicotinic acetylcholine receptors (nAChRs) throughout the brain. Essential for the proper folding, assembly, function and surface trafficking of alpha-7 (CHRNA7), alpha-4-beta-2, alpha-3-beta-2 and alpha-3-beta-4 receptors. Stably associates with ribophorin-1 (RPN1) and ribophorin-2 (RPN2) (components of the oligosaccharyl transferase (OST) complex) and with calnexin (CANX), both of which are critical for NACHO-mediated effects on CHRNA7 assembly and function. Facilitates the proper folding and assembly of alpha-6-beta-2 and alpha-6-beta-2-beta-3 receptors and acts at early stages of the nAChRs subunit assembly. Promotes the expression of the alpha-4(2):beta-2(3) stoichiometric form over the alpha-4(3):beta-2(2) form. The protein is Novel acetylcholine receptor chaperone (TMEM35A) of Macaca fascicularis (Crab-eating macaque).